Consider the following 519-residue polypeptide: Xylose import ATP-binding protein XylG (519 aa).

ABC transporter domains are found at residues 6–245 and 262–507; these read LTMR…VGRE and LDVR…LKPA. Residue 38-45 coordinates ATP; it reads GENGAGKS.

This sequence belongs to the ABC transporter superfamily. Xylose importer (TC 3.A.1.2.4) family. The complex is composed of two ATP-binding proteins (XylG), two transmembrane proteins (XylH) and a solute-binding protein (XylF).

It localises to the cell inner membrane. The enzyme catalyses D-xylose(out) + ATP + H2O = D-xylose(in) + ADP + phosphate + H(+). Its function is as follows. Part of the ABC transporter complex XylFGH involved in xylose import. Responsible for energy coupling to the transport system. The polypeptide is Xylose import ATP-binding protein XylG (Burkholderia cenocepacia (strain HI2424)).